Here is a 105-residue protein sequence, read N- to C-terminus: Large ribosomal subunit protein bL21 (105 aa).

The protein belongs to the bacterial ribosomal protein bL21 family. Part of the 50S ribosomal subunit. Contacts protein L20.

In terms of biological role, this protein binds to 23S rRNA in the presence of protein L20. In Methylobacterium nodulans (strain LMG 21967 / CNCM I-2342 / ORS 2060), this protein is Large ribosomal subunit protein bL21.